The following is a 185-amino-acid chain: MLKEIKTKTKERMLKTIQSFYNDIKGIRTGRASASLLDGIVVNIYGGHQKLNQVAGVSVTDNKTLLIKVWDIGVIGEVKNAILNANLNLNPVVEGNTIRIVLPDLTQETRERLVKLLHQFAENARVAIRNIRRDIMEEIERMQENKKISEDDFHNAKKEIQNITDDNIKKIDGELSIKEKDILNY.

This sequence belongs to the RRF family.

It is found in the cytoplasm. Responsible for the release of ribosomes from messenger RNA at the termination of protein biosynthesis. May increase the efficiency of translation by recycling ribosomes from one round of translation to another. This Wolbachia sp. subsp. Brugia malayi (strain TRS) protein is Ribosome-recycling factor.